The primary structure comprises 425 residues: (S)-6-hydroxynicotine oxidase (425 aa).

FAD is bound by residues Ser12, Glu31, 38–39 (GR), and 56–59 (GGAY). Residue Asn166 participates in (S)-6-hydroxynicotine binding. Residue Val226 coordinates FAD. Positions 311, 326, and 371 each coordinate (S)-6-hydroxynicotine. Residues Ser398 and 406-408 (GYI) each bind FAD. Tyr407 serves as a coordination point for (S)-6-hydroxynicotine.

This sequence belongs to the flavin monoamine oxidase family. In terms of assembly, homodimer. It depends on FAD as a cofactor.

It localises to the cytoplasm. It carries out the reaction (S)-6-hydroxynicotine + O2 + H2O = 6-hydroxypseudooxynicotine + H2O2. It catalyses the reaction (S)-6-hydroxynicotine + O2 = 6-hydroxy-N-methylmyosmine + H2O2. Its pathway is alkaloid degradation; nicotine degradation; 6-hydroxypseudooxynicotine from nicotine (S-isomer route): step 2/2. Inhibited by (R)-6-hydroxynicotine. Inhibited by high concentrations of phenanthroline. Activity is strongly affected by Hg(2+) and p-chloromercuriphenylsulfonate, but not by N-ethylmaleimide and 5,5'-dithiobis-(2-nitrobenzoate). Its function is as follows. Involved in the degradation of L-nicotine. Catalyzes the oxidation of (S)-6-hydroxynicotine (6-hydroxy-L-nicotine) to 6-hydroxypseudooxynicotine. Oxidation of the pyrrolidine ring of (S)-6-hydroxynicotine leads to the formation of the optically inactive 6-hydroxy-N-methylmyosmine, which hydrolyzes spontaneously to 6-hydroxypseudooxynicotine. Acts with absolute stereospecificity on the L-form of 6-hydroxynicotine. Can also use (S)-6-hydroxynornicotine. The sequence is that of (S)-6-hydroxynicotine oxidase from Paenarthrobacter nicotinovorans (Arthrobacter nicotinovorans).